Here is an 852-residue protein sequence, read N- to C-terminus: Vacuolar protein sorting-associated protein 16 homolog (852 aa).

It belongs to the VPS16 family. As to quaternary structure, probable core component of at least two putative endosomal tethering complexes, the homotypic fusion and vacuole protein sorting (HOPS) complex and the class C core vacuole/endosome tethering (CORVET) complex. Their common core is composed of the class C Vps proteins vps-11, vps-16 and vps-18, which in HOPS further associates with vps-33.1, vps-39 and vps-41 and in CORVET with vps-8 and vps-33.2.

It localises to the late endosome membrane. The protein resides in the lysosome membrane. Functionally, plays a role in vesicle-mediated protein trafficking to lysosomal compartments including the endocytic membrane transport pathways. Believed to act as a core component of the putative HOPS and CORVET endosomal tethering complexes which are proposed to be involved in the rab-5-to-rab-7 endosome conversion probably implicating sand-1, and via binding SNAREs and SNARE complexes to mediate tethering and docking events during SNARE-mediated membrane fusion. The HOPS complex is proposed to be recruited to rab-7 on the late endosomal membrane and to regulate late endocytic, phagocytic and autophagic traffic towards lysosomes. Within the HOPS complex, contributes to the normal development of gut granules in the adult intestine. The CORVET complex is proposed to function as a rab-5 effector to mediate early endosome fusion probably in specific endosome subpopulations. Required for recruitment of vps-33.1 to the HOPS complex. Required for fusion of endosomes and autophagosomes with lysosomes; the function is dependent on its association with vps-33.1 but not vps-33.2. The protein is Vacuolar protein sorting-associated protein 16 homolog of Caenorhabditis elegans.